Reading from the N-terminus, the 423-residue chain is DUF21 domain-containing protein At2g14520 (423 aa).

The Extracellular portion of the chain corresponds to 1–11; the sequence is MAVEYECCGTS. Positions 8–191 constitute a CNNM transmembrane domain; the sequence is CGTSFFIHIA…GKGGELTHDE (184 aa). Residues 12–32 traverse the membrane as a helical segment; it reads FFIHIAVIVLLVLFAGLMSGL. Over 33 to 70 the chain is Cytoplasmic; that stretch reads TLGLMSMSLVDLEVLAKSGTPRDRIHAAKILPVVKNQH. The chain crosses the membrane as a helical span at residues 71–91; it reads LLLCTLLICNAAAMEALPIFL. The Extracellular segment spans residues 92–94; that stretch reads DAL. A helical transmembrane segment spans residues 95–115; sequence VTAWGAILISVTLILLFGEII. Residues 116–136 are Cytoplasmic-facing; it reads PQSVCSRHGLAIGATVAPFVR. The chain crosses the membrane as a helical span at residues 137-157; sequence VLVWICLPVAWPISKLLDFLL. Topologically, residues 158–423 are extracellular; that stretch reads GHGRVALFRR…DETDHHFEDL (266 aa). The CBS 1 domain occupies 210-271; that stretch reads MTPISDTFVI…TINPDEEIQV (62 aa). N-linked (GlcNAc...) asparagine glycosylation is found at N273 and N322. 2 CBS domains span residues 275-332 and 356-415; these read TIRR…RVDV and PNRA…IFDE.

It localises to the membrane. The sequence is that of DUF21 domain-containing protein At2g14520 (CBSDUF3) from Arabidopsis thaliana (Mouse-ear cress).